The primary structure comprises 236 residues: 2-C-methyl-D-erythritol 4-phosphate cytidylyltransferase (236 aa).

Belongs to the IspD/TarI cytidylyltransferase family. IspD subfamily. Homodimer.

The enzyme catalyses 2-C-methyl-D-erythritol 4-phosphate + CTP + H(+) = 4-CDP-2-C-methyl-D-erythritol + diphosphate. It participates in isoprenoid biosynthesis; isopentenyl diphosphate biosynthesis via DXP pathway; isopentenyl diphosphate from 1-deoxy-D-xylulose 5-phosphate: step 2/6. Its function is as follows. Catalyzes the formation of 4-diphosphocytidyl-2-C-methyl-D-erythritol from CTP and 2-C-methyl-D-erythritol 4-phosphate (MEP). In Escherichia coli O127:H6 (strain E2348/69 / EPEC), this protein is 2-C-methyl-D-erythritol 4-phosphate cytidylyltransferase.